A 354-amino-acid polypeptide reads, in one-letter code: Fructose-bisphosphate aldolase (354 aa).

Serine 50 contacts D-glyceraldehyde 3-phosphate. Aspartate 83 (proton donor) is an active-site residue. 4 residues coordinate Zn(2+): histidine 84, aspartate 105, glutamate 142, and histidine 198. A dihydroxyacetone phosphate-binding site is contributed by glycine 199. Histidine 232 is a Zn(2+) binding site. Dihydroxyacetone phosphate contacts are provided by residues 233-235 and 275-278; these read GSS and NIDT.

Belongs to the class II fructose-bisphosphate aldolase family. The cofactor is Zn(2+).

It carries out the reaction beta-D-fructose 1,6-bisphosphate = D-glyceraldehyde 3-phosphate + dihydroxyacetone phosphate. It functions in the pathway carbohydrate degradation; glycolysis; D-glyceraldehyde 3-phosphate and glycerone phosphate from D-glucose: step 4/4. Its function is as follows. Catalyzes the aldol condensation of dihydroxyacetone phosphate (DHAP or glycerone-phosphate) with glyceraldehyde 3-phosphate (G3P) to form fructose 1,6-bisphosphate (FBP) in gluconeogenesis and the reverse reaction in glycolysis. The polypeptide is Fructose-bisphosphate aldolase (fba) (Pseudomonas aeruginosa (strain ATCC 15692 / DSM 22644 / CIP 104116 / JCM 14847 / LMG 12228 / 1C / PRS 101 / PAO1)).